The primary structure comprises 253 residues: 3-deoxy-manno-octulosonate cytidylyltransferase (253 aa).

It belongs to the KdsB family.

The protein resides in the cytoplasm. It catalyses the reaction 3-deoxy-alpha-D-manno-oct-2-ulosonate + CTP = CMP-3-deoxy-beta-D-manno-octulosonate + diphosphate. The protein operates within nucleotide-sugar biosynthesis; CMP-3-deoxy-D-manno-octulosonate biosynthesis; CMP-3-deoxy-D-manno-octulosonate from 3-deoxy-D-manno-octulosonate and CTP: step 1/1. It functions in the pathway bacterial outer membrane biogenesis; lipopolysaccharide biosynthesis. In terms of biological role, activates KDO (a required 8-carbon sugar) for incorporation into bacterial lipopolysaccharide in Gram-negative bacteria. The chain is 3-deoxy-manno-octulosonate cytidylyltransferase from Neisseria gonorrhoeae (strain ATCC 700825 / FA 1090).